Reading from the N-terminus, the 452-residue chain is Chloride/fluoride channel protein (452 aa).

10 helical membrane passes run 23–43 (WLAL…LFLL), 57–77 (WVIW…HLIG), 97–117 (IVPL…HLFG), 160–180 (FASV…VLAI), 188–208 (LFPC…WGVV), 222–242 (LWSV…GLLF), 264–284 (PFAG…NHYI), 315–337 (VFTV…FYIG), 344–364 (LAPL…VAVF), and 386–408 (IAPL…GIYH).

The protein belongs to the chloride channel (TC 2.A.49) family.

It localises to the cell membrane. Its function is as follows. Transports chloride and fluoride with similar efficiency. This chain is Chloride/fluoride channel protein (eriC), found in Pseudomonas syringae pv. tomato (strain ATCC BAA-871 / DC3000).